Consider the following 243-residue polypeptide: Large ribosomal subunit protein uL3 (243 aa).

Disordered regions lie at residues 139–164 and 218–243; these read VSHR…KMPG and KPGK…QEGV. Gln151 carries the post-translational modification N5-methylglutamine. Low complexity predominate over residues 231–243; the sequence is QTAAAPAAEQEGV.

Belongs to the universal ribosomal protein uL3 family. Part of the 50S ribosomal subunit. Forms a cluster with proteins L14 and L19. In terms of processing, methylated by PrmB.

Its function is as follows. One of the primary rRNA binding proteins, it binds directly near the 3'-end of the 23S rRNA, where it nucleates assembly of the 50S subunit. The sequence is that of Large ribosomal subunit protein uL3 from Rhodopseudomonas palustris (strain BisB18).